The sequence spans 325 residues: Protein FAM50B (325 aa).

An N-acetylalanine modification is found at alanine 2. Disordered regions lie at residues glutamine 92–arginine 111 and arginine 137–glutamate 160.

It belongs to the FAM50 family. As to expression, widely expressed. Mostly abundant in testis and adult and fetal brain.

The sequence is that of Protein FAM50B (FAM50B) from Homo sapiens (Human).